A 416-amino-acid chain; its full sequence is Probable carboxypeptidase An18g06210 (416 aa).

The N-terminal stretch at 1 to 16 (MKSPISLLAAVGVASA) is a signal peptide. N54, N70, and N129 each carry an N-linked (GlcNAc...) asparagine glycan. D142 serves as a coordination point for Zn(2+). Residue E174 is the Proton acceptor of the active site. A Zn(2+)-binding site is contributed by E175. N187 and N319 each carry an N-linked (GlcNAc...) asparagine glycan.

Belongs to the peptidase M20A family. Zn(2+) is required as a cofactor.

The protein localises to the secreted. The chain is Probable carboxypeptidase An18g06210 from Aspergillus niger (strain ATCC MYA-4892 / CBS 513.88 / FGSC A1513).